The chain runs to 354 residues: Soluble interferon alpha/beta receptor OPG204 (354 aa).

The N-terminal stretch at M1–F22 is a signal peptide. Ig-like C2-type domains follow at residues I68–V150 and P158–S240. Cystine bridges form between C76/C132 and C175/C224. N120, N124, N185, N272, and N324 each carry an N-linked (GlcNAc...) asparagine; by host glycan. Positions P249–T348 constitute an Ig-like V-type domain. A disulfide bond links C275 and C336.

This sequence belongs to the interleukin-1 receptor family. In terms of assembly, interacts with host IFNA1.

It is found in the secreted. Functionally, counteracts the antiviral effects of host IFN-alpha/beta and key IFN-inducible proteins involved in viral RNA degradation suxh as host OAS1. Acts as a soluble IFN-alpha receptor and thus inhibits the interaction between host IFN-alpha and its receptor. The protein is Soluble interferon alpha/beta receptor OPG204 (OPG204) of Homo sapiens (Human).